The following is a 304-amino-acid chain: Glutaminase (304 aa).

Positions 63, 114, 158, 165, 189, 240, and 258 each coordinate substrate.

The protein belongs to the glutaminase family. In terms of assembly, homotetramer.

The catalysed reaction is L-glutamine + H2O = L-glutamate + NH4(+). This Shewanella sp. (strain ANA-3) protein is Glutaminase.